The following is a 106-amino-acid chain: Large ribosomal subunit protein uL24 (106 aa).

The protein belongs to the universal ribosomal protein uL24 family. As to quaternary structure, part of the 50S ribosomal subunit.

One of two assembly initiator proteins, it binds directly to the 5'-end of the 23S rRNA, where it nucleates assembly of the 50S subunit. Its function is as follows. One of the proteins that surrounds the polypeptide exit tunnel on the outside of the subunit. The chain is Large ribosomal subunit protein uL24 from Dechloromonas aromatica (strain RCB).